The sequence spans 78 residues: Acyl carrier protein (78 aa).

One can recognise a Carrier domain in the interval 2–77 (SDIEQRVKKI…QAIDYVNANL (76 aa)). The residue at position 37 (Ser-37) is an O-(pantetheine 4'-phosphoryl)serine.

Belongs to the acyl carrier protein (ACP) family. Post-translationally, 4'-phosphopantetheine is transferred from CoA to a specific serine of apo-ACP by AcpS. This modification is essential for activity because fatty acids are bound in thioester linkage to the sulfhydryl of the prosthetic group.

The protein localises to the cytoplasm. Its pathway is lipid metabolism; fatty acid biosynthesis. Functionally, carrier of the growing fatty acid chain in fatty acid biosynthesis. This Methylobacillus flagellatus (strain ATCC 51484 / DSM 6875 / VKM B-1610 / KT) protein is Acyl carrier protein.